The sequence spans 355 residues: Uroporphyrinogen decarboxylase (355 aa).

Substrate is bound by residues 27–31, Asp77, Tyr154, Thr209, and His327; that span reads RQAGR.

Belongs to the uroporphyrinogen decarboxylase family. Homodimer.

The protein resides in the cytoplasm. The enzyme catalyses uroporphyrinogen III + 4 H(+) = coproporphyrinogen III + 4 CO2. It functions in the pathway porphyrin-containing compound metabolism; protoporphyrin-IX biosynthesis; coproporphyrinogen-III from 5-aminolevulinate: step 4/4. Functionally, catalyzes the decarboxylation of four acetate groups of uroporphyrinogen-III to yield coproporphyrinogen-III. The protein is Uroporphyrinogen decarboxylase of Tolumonas auensis (strain DSM 9187 / NBRC 110442 / TA 4).